Here is a 611-residue protein sequence, read N- to C-terminus: Probable potassium transport system protein Kup 1 (611 aa).

12 consecutive transmembrane segments (helical) span residues 6–26 (LMVG…LYTM), 44–64 (MLSL…VAVV), 90–110 (LGVI…GAIT), 129–149 (ISPY…ALQA), 158–178 (LFGP…LFGI), 193–213 (GLSY…AVFL), 237–257 (WYGL…AVVV), 280–300 (LVAL…SGAF), 328–348 (IYIG…TLGF), 354–374 (LAAA…ILMF), 385–405 (LAAS…FVSA), and 410–430 (VLEG…LMMT).

This sequence belongs to the HAK/KUP transporter (TC 2.A.72) family.

The protein localises to the cell inner membrane. The enzyme catalyses K(+)(in) + H(+)(in) = K(+)(out) + H(+)(out). Its function is as follows. Transport of potassium into the cell. Likely operates as a K(+):H(+) symporter. This Bradyrhizobium sp. (strain BTAi1 / ATCC BAA-1182) protein is Probable potassium transport system protein Kup 1.